Here is a 316-residue protein sequence, read N- to C-terminus: 4-hydroxy-3-methylbut-2-enyl diphosphate reductase (316 aa).

Cys12 provides a ligand contact to [4Fe-4S] cluster. Residues His43 and His81 each contribute to the (2E)-4-hydroxy-3-methylbut-2-enyl diphosphate site. Dimethylallyl diphosphate-binding residues include His43 and His81. Residues His43 and His81 each coordinate isopentenyl diphosphate. Cys103 serves as a coordination point for [4Fe-4S] cluster. His131 lines the (2E)-4-hydroxy-3-methylbut-2-enyl diphosphate pocket. His131 contributes to the dimethylallyl diphosphate binding site. Isopentenyl diphosphate is bound at residue His131. The Proton donor role is filled by Glu133. Thr170 is a (2E)-4-hydroxy-3-methylbut-2-enyl diphosphate binding site. Cys198 contributes to the [4Fe-4S] cluster binding site. Positions 226, 228, and 271 each coordinate (2E)-4-hydroxy-3-methylbut-2-enyl diphosphate. 3 residues coordinate dimethylallyl diphosphate: Ser226, Asn228, and Ser271. Ser226, Asn228, and Ser271 together coordinate isopentenyl diphosphate.

It belongs to the IspH family. The cofactor is [4Fe-4S] cluster.

The catalysed reaction is isopentenyl diphosphate + 2 oxidized [2Fe-2S]-[ferredoxin] + H2O = (2E)-4-hydroxy-3-methylbut-2-enyl diphosphate + 2 reduced [2Fe-2S]-[ferredoxin] + 2 H(+). It carries out the reaction dimethylallyl diphosphate + 2 oxidized [2Fe-2S]-[ferredoxin] + H2O = (2E)-4-hydroxy-3-methylbut-2-enyl diphosphate + 2 reduced [2Fe-2S]-[ferredoxin] + 2 H(+). It participates in isoprenoid biosynthesis; dimethylallyl diphosphate biosynthesis; dimethylallyl diphosphate from (2E)-4-hydroxy-3-methylbutenyl diphosphate: step 1/1. The protein operates within isoprenoid biosynthesis; isopentenyl diphosphate biosynthesis via DXP pathway; isopentenyl diphosphate from 1-deoxy-D-xylulose 5-phosphate: step 6/6. Catalyzes the conversion of 1-hydroxy-2-methyl-2-(E)-butenyl 4-diphosphate (HMBPP) into a mixture of isopentenyl diphosphate (IPP) and dimethylallyl diphosphate (DMAPP). Acts in the terminal step of the DOXP/MEP pathway for isoprenoid precursor biosynthesis. The chain is 4-hydroxy-3-methylbut-2-enyl diphosphate reductase from Bacillus thuringiensis (strain Al Hakam).